Here is a 186-residue protein sequence, read N- to C-terminus: Ribosome-recycling factor (186 aa).

The protein belongs to the RRF family.

It is found in the cytoplasm. Functionally, responsible for the release of ribosomes from messenger RNA at the termination of protein biosynthesis. May increase the efficiency of translation by recycling ribosomes from one round of translation to another. This Ralstonia nicotianae (strain ATCC BAA-1114 / GMI1000) (Ralstonia solanacearum) protein is Ribosome-recycling factor.